The chain runs to 369 residues: ATP-dependent 6-phosphofructokinase (369 aa).

ATP is bound by residues Gly-15, 81–82 (KG), and 108–111 (GDGS). A Mg(2+)-binding site is contributed by Asp-109. Residues 132–134 (TID), Arg-169, 176–178 (MGR), Glu-230, Arg-266, and 272–275 (HIQR) contribute to the substrate site. Asp-134 serves as the catalytic Proton acceptor.

The protein belongs to the phosphofructokinase type A (PFKA) family. Mixed-substrate PFK group III subfamily. Homodimer or homotetramer. Mg(2+) is required as a cofactor.

The protein localises to the cytoplasm. It catalyses the reaction beta-D-fructose 6-phosphate + ATP = beta-D-fructose 1,6-bisphosphate + ADP + H(+). Its pathway is carbohydrate degradation; glycolysis; D-glyceraldehyde 3-phosphate and glycerone phosphate from D-glucose: step 3/4. Its function is as follows. Catalyzes the phosphorylation of D-fructose 6-phosphate to fructose 1,6-bisphosphate by ATP, the first committing step of glycolysis. The protein is ATP-dependent 6-phosphofructokinase of Thermosynechococcus vestitus (strain NIES-2133 / IAM M-273 / BP-1).